The chain runs to 41 residues: Large ribosomal subunit protein bL36 (41 aa).

Belongs to the bacterial ribosomal protein bL36 family.

This is Large ribosomal subunit protein bL36 (rpmJ) from Agrobacterium fabrum (strain C58 / ATCC 33970) (Agrobacterium tumefaciens (strain C58)).